Here is a 1289-residue protein sequence, read N- to C-terminus: Outer capsid protein lambda-2 (1289 aa).

893 to 900 provides a ligand contact to ATP; the sequence is GAAAAGKS.

It belongs to the orthoreovirus lambda-2 protein family. As to quaternary structure, interacts with protein mu-NS; in viral inclusions.

The protein resides in the virion. It carries out the reaction a 5'-end diphospho-ribonucleoside in mRNA + GTP + H(+) = a 5'-end (5'-triphosphoguanosine)-ribonucleoside in mRNA + diphosphate. It catalyses the reaction a 5'-end (5'-triphosphoguanosine)-ribonucleoside in mRNA + S-adenosyl-L-methionine = a 5'-end (N(7)-methyl 5'-triphosphoguanosine)-ribonucleoside in mRNA + S-adenosyl-L-homocysteine. Its function is as follows. Outer capsid protein involved in mRNA capping. Catalyzes the last 3 enzymatic activities for formation of the 5' cap structure on the viral plus-strand transcripts, namely the RNA guanylyltransferase, RNA-7N- and RNA-2'O-methyltransferase activities. The polypeptide is Outer capsid protein lambda-2 (L2) (Reovirus type 1 (strain Lang) (T1L)).